A 51-amino-acid polypeptide reads, in one-letter code: Conotoxin Cal6.33 (51 aa).

The first 22 residues, M1–A22, serve as a signal peptide directing secretion. 3 disulfide bridges follow: C25–C39, C32–C43, and C38–C50.

Belongs to the conotoxin O1 superfamily. As to expression, expressed by the venom duct.

The protein resides in the secreted. Functionally, probable neurotoxin. The chain is Conotoxin Cal6.33 from Californiconus californicus (California cone).